A 454-amino-acid chain; its full sequence is MINFNEVLETNKMIEQENLDVRTITLGISLLDCISSNLEELNQNIYDKITTVAKDLVTTGKKIERQFGIPVVNKRISVTPIAMIGASACKTPSDFVTIAKTLDRAANTVGVNFIGGYSALVSKGMTSSERLLIESIPEALAVTERVCSSVNVGSTKTGINMDAVKLLGQIMLDTAEYTKEKDSLGCAKLVIFCNAPDDNPFMAGAFHGVTEADAIINVGVSGPGVVKTALESVRGEDFGTLCETIKKTAFKITRVGQLVAMEASKMLNIPFGIVDLSLAPTPAVGDSVAEILQEIGLEYPGAPGTTAALALLNDSVKKGGVMASSYVGGLSGAFIPVSEDQGMIDAVRAGCLTLEKLEAMTCVCSVGLDMIAIPGDTKATTISGIIADEMAIGMINQKTTAVRLIPVIGKKVGDIAEFGGLLGYAPIMPVNNFSCDNFVNRGGRIPAPIHSFKN.

This sequence belongs to the UPF0210 family. In terms of assembly, homodimer.

The polypeptide is UPF0210 protein Cphy_2797 (Lachnoclostridium phytofermentans (strain ATCC 700394 / DSM 18823 / ISDg) (Clostridium phytofermentans)).